A 123-amino-acid polypeptide reads, in one-letter code: Large ribosomal subunit protein bL12 (123 aa).

The protein belongs to the bacterial ribosomal protein bL12 family. As to quaternary structure, homodimer. Part of the ribosomal stalk of the 50S ribosomal subunit. Forms a multimeric L10(L12)X complex, where L10 forms an elongated spine to which 2 to 4 L12 dimers bind in a sequential fashion. Binds GTP-bound translation factors.

Forms part of the ribosomal stalk which helps the ribosome interact with GTP-bound translation factors. Is thus essential for accurate translation. This Clostridium acetobutylicum (strain ATCC 824 / DSM 792 / JCM 1419 / IAM 19013 / LMG 5710 / NBRC 13948 / NRRL B-527 / VKM B-1787 / 2291 / W) protein is Large ribosomal subunit protein bL12.